Here is a 132-residue protein sequence, read N- to C-terminus: MPTIQQLIRHGRSVKASKTASPALEKCPQKRGVCTRVYTTTPKKPNSALRKVARVRLSNKIEVTAYIPGEGHNLQEHSIVLIRGGRVKDLPGVRYHIVRGSLDTSGVADRRQSRSKYGAKQPKEGGAAKGKK.

The residue at position 89 (Asp-89) is a 3-methylthioaspartic acid. Residues 103–132 (DTSGVADRRQSRSKYGAKQPKEGGAAKGKK) form a disordered region.

Belongs to the universal ribosomal protein uS12 family. Part of the 30S ribosomal subunit. Contacts proteins S8 and S17. May interact with IF1 in the 30S initiation complex.

In terms of biological role, with S4 and S5 plays an important role in translational accuracy. Functionally, interacts with and stabilizes bases of the 16S rRNA that are involved in tRNA selection in the A site and with the mRNA backbone. Located at the interface of the 30S and 50S subunits, it traverses the body of the 30S subunit contacting proteins on the other side and probably holding the rRNA structure together. The combined cluster of proteins S8, S12 and S17 appears to hold together the shoulder and platform of the 30S subunit. This is Small ribosomal subunit protein uS12 from Chlorobium phaeovibrioides (strain DSM 265 / 1930) (Prosthecochloris vibrioformis (strain DSM 265)).